The primary structure comprises 572 residues: Probable cysteine--tRNA ligase, mitochondrial (572 aa).

Cysteine 81 is a Zn(2+) binding site. An L-cysteine-binding site is contributed by glycine 82. The 'HIGH' region motif lies at 83–93 (PTVYDHAHLGH). Position 122 (threonine 122) interacts with L-cysteine. Residues 127–130 (KIIK) carry the 'KIIK' region motif. 3 residues coordinate Zn(2+): cysteine 260, histidine 285, and glutamate 289. An L-cysteine-binding site is contributed by histidine 285. The 'KMSKS' region motif lies at 320–324 (KMSKS). An ATP-binding site is contributed by lysine 323.

The protein belongs to the class-I aminoacyl-tRNA synthetase family. Requires Zn(2+) as cofactor.

The protein resides in the mitochondrion. It carries out the reaction tRNA(Cys) + L-cysteine + ATP = L-cysteinyl-tRNA(Cys) + AMP + diphosphate. It catalyses the reaction 2 L-cysteine = S-sulfanyl-L-cysteine + L-alanine. The catalysed reaction is S-sulfanyl-L-cysteine + L-cysteine = S-disulfanyl-L-cysteine + L-alanine. The enzyme catalyses S-sulfanyl-L-cysteine + tRNA(Cys) + ATP = (S)-sulfanyl-L-cysteinyl-tRNA(Cys) + AMP + diphosphate. It carries out the reaction S-disulfanyl-L-cysteine + tRNA(Cys) + ATP = (S)-disulfanyl-L-cysteinyl-tRNA(Cys) + AMP + diphosphate. In terms of biological role, mitochondrial cysteine-specific aminoacyl-tRNA synthetase that catalyzes the ATP-dependent ligation of cysteine to tRNA(Cys). Functionally, in addition to its role as an aminoacyl-tRNA synthetase, has also cysteine persulfide synthase activity. Produces reactive persulfide species such as cysteine persulfide (CysSSH) from substrate cysteine and mediate direct incorporation of CysSSH into proteins during translations, resulting in protein persulfides and polysulfides. CysSSHs behave as potent antioxidants and cellular protectants. This is Probable cysteine--tRNA ligase, mitochondrial (cars2) from Xenopus tropicalis (Western clawed frog).